A 333-amino-acid polypeptide reads, in one-letter code: Transaldolase (333 aa).

Residue Lys135 is the Schiff-base intermediate with substrate of the active site.

The protein belongs to the transaldolase family. Type 1 subfamily. As to quaternary structure, homodimer.

It localises to the cytoplasm. The enzyme catalyses D-sedoheptulose 7-phosphate + D-glyceraldehyde 3-phosphate = D-erythrose 4-phosphate + beta-D-fructose 6-phosphate. It participates in carbohydrate degradation; pentose phosphate pathway; D-glyceraldehyde 3-phosphate and beta-D-fructose 6-phosphate from D-ribose 5-phosphate and D-xylulose 5-phosphate (non-oxidative stage): step 2/3. Transaldolase is important for the balance of metabolites in the pentose-phosphate pathway. In Prochlorococcus marinus subsp. pastoris (strain CCMP1986 / NIES-2087 / MED4), this protein is Transaldolase.